The following is a 406-amino-acid chain: RILP-like protein 1 (406 aa).

Positions 5–99 (QLGAALDKSA…LEKEKKHKKE (95 aa)) constitute an RH1 domain. Residues 105 to 319 (DVWRGEAQDL…KVFMLQEEIA (215 aa)) are a coiled coil. 2 disordered regions span residues 234-272 (EVSS…PAQE) and 323-351 (SEEQ…NFQP). Residues 241-257 (EVSRLKEKLKEQSRSNE) are compositionally biased toward basic and acidic residues. Residues 289–358 (RPRFTLQELR…FQPESGIKRL (70 aa)) enclose the RH2 domain. Over residues 340 to 351 (TLRTNPRSNFQP) the composition is skewed to polar residues.

This sequence belongs to the RILPL family.

It is found in the cytoplasm. Its subcellular location is the cytosol. The protein localises to the cytoskeleton. The protein resides in the microtubule organizing center. It localises to the centrosome. It is found in the cell projection. Its subcellular location is the cilium. Plays a role in the regulation of cell shape and polarity. Plays a role in cellular protein transport, including protein transport away from primary cilia. Neuroprotective protein. The protein is RILP-like protein 1 (rilpl1) of Danio rerio (Zebrafish).